A 600-amino-acid polypeptide reads, in one-letter code: Proline--tRNA ligase (600 aa).

Belongs to the class-II aminoacyl-tRNA synthetase family. ProS type 1 subfamily. In terms of assembly, homodimer.

The protein resides in the cytoplasm. It carries out the reaction tRNA(Pro) + L-proline + ATP = L-prolyl-tRNA(Pro) + AMP + diphosphate. Catalyzes the attachment of proline to tRNA(Pro) in a two-step reaction: proline is first activated by ATP to form Pro-AMP and then transferred to the acceptor end of tRNA(Pro). As ProRS can inadvertently accommodate and process non-cognate amino acids such as alanine and cysteine, to avoid such errors it has two additional distinct editing activities against alanine. One activity is designated as 'pretransfer' editing and involves the tRNA(Pro)-independent hydrolysis of activated Ala-AMP. The other activity is designated 'posttransfer' editing and involves deacylation of mischarged Ala-tRNA(Pro). The misacylated Cys-tRNA(Pro) is not edited by ProRS. In Prochlorococcus marinus (strain MIT 9312), this protein is Proline--tRNA ligase.